Consider the following 297-residue polypeptide: Acetylglutamate kinase (297 aa).

Substrate is bound by residues 68–69 (GG), R90, and N195.

It belongs to the acetylglutamate kinase family. ArgB subfamily.

The protein resides in the cytoplasm. The catalysed reaction is N-acetyl-L-glutamate + ATP = N-acetyl-L-glutamyl 5-phosphate + ADP. The protein operates within amino-acid biosynthesis; L-arginine biosynthesis; N(2)-acetyl-L-ornithine from L-glutamate: step 2/4. Functionally, catalyzes the ATP-dependent phosphorylation of N-acetyl-L-glutamate. This is Acetylglutamate kinase from Chelativorans sp. (strain BNC1).